Reading from the N-terminus, the 311-residue chain is Methionyl-tRNA formyltransferase (311 aa).

(6S)-5,6,7,8-tetrahydrofolate is bound at residue 112-115 (SLLP).

It belongs to the Fmt family.

The catalysed reaction is L-methionyl-tRNA(fMet) + (6R)-10-formyltetrahydrofolate = N-formyl-L-methionyl-tRNA(fMet) + (6S)-5,6,7,8-tetrahydrofolate + H(+). Its function is as follows. Attaches a formyl group to the free amino group of methionyl-tRNA(fMet). The formyl group appears to play a dual role in the initiator identity of N-formylmethionyl-tRNA by promoting its recognition by IF2 and preventing the misappropriation of this tRNA by the elongation apparatus. The polypeptide is Methionyl-tRNA formyltransferase (Sinorhizobium medicae (strain WSM419) (Ensifer medicae)).